We begin with the raw amino-acid sequence, 248 residues long: MLTFNLNAISSSFSVVPFHANYPLSTQTQLLVPSNLSYSFATTGTRKFKSFQLKAGFWESIKSGLMKNNSMQVIDPPSADEEDEEPLPQEFVLVEKTEPDGTIEQIIFSSGGDVDVYDLQALCDKGWPRRPLSKLAAALKNSYIVASLHSIRKSPGSEGNEQKRLIGMARATSDHAFNATIWDVLVDPGYQGQGLGKALIEKLIRTLLQRDIGNITLFADSQVVEFYRNLGFEADPEGIKGMFWYPNH.

One can recognise an N-acetyltransferase domain in the interval 106 to 248 (IIFSSGGDVD…IKGMFWYPNH (143 aa)).

The protein belongs to the acetyltransferase family. Does not interact with the effector Avh52 from the pathogen Phytophtora sojae.

It is found in the cytoplasm. The protein localises to the nucleus. Its function is as follows. May acetylate histones H2A and H3. The sequence is that of Probable acetyltransferase TAP2 from Glycine max (Soybean).